Here is a 344-residue protein sequence, read N- to C-terminus: UDP-N-acetylenolpyruvoylglucosamine reductase (344 aa).

Residues Ile-19–Asn-189 form the FAD-binding PCMH-type domain. Residue Arg-165 is part of the active site. Ser-235 (proton donor) is an active-site residue. The active site involves Glu-331.

This sequence belongs to the MurB family. Requires FAD as cofactor.

It localises to the cytoplasm. The enzyme catalyses UDP-N-acetyl-alpha-D-muramate + NADP(+) = UDP-N-acetyl-3-O-(1-carboxyvinyl)-alpha-D-glucosamine + NADPH + H(+). The protein operates within cell wall biogenesis; peptidoglycan biosynthesis. In terms of biological role, cell wall formation. The chain is UDP-N-acetylenolpyruvoylglucosamine reductase from Buchnera aphidicola subsp. Schizaphis graminum (strain Sg).